Consider the following 235-residue polypeptide: Endonuclease V (235 aa).

Asp-45 and Asp-115 together coordinate Mg(2+).

It belongs to the endonuclease V family. The cofactor is Mg(2+).

It is found in the cytoplasm. The enzyme catalyses Endonucleolytic cleavage at apurinic or apyrimidinic sites to products with a 5'-phosphate.. Its function is as follows. DNA repair enzyme involved in the repair of deaminated bases. Selectively cleaves double-stranded DNA at the second phosphodiester bond 3' to a deoxyinosine leaving behind the intact lesion on the nicked DNA. The polypeptide is Endonuclease V (Bacillus thuringiensis subsp. konkukian (strain 97-27)).